The sequence spans 611 residues: Conglutin beta 1 (611 aa).

The first 30 residues, 1-30 (MAKMRVRLPMLILLLGVVFLLAASIGIAYG), serve as a signal peptide directing secretion. 2 stretches are compositionally biased toward basic and acidic residues: residues 32–82 (KDFT…RSQS) and 130–141 (SRREEREEREQE). Disordered regions lie at residues 32–194 (KDFT…NRFQ) and 384–407 (LRKHAQSSSGEGKPSESGPFNLRS). The segment covering 142-151 (QGSSSGSQRG) has biased composition (low complexity). A compositionally biased stretch (basic and acidic residues) spans 152 to 181 (SGDERRQHRERRVHREEREQEQDSRSDSRR). One can recognise a Cupin type-1 1 domain in the interval 186–344 (YHFSSNRFQT…TFNTRYEEIE (159 aa)). Residues 390-402 (SSSGEGKPSESGP) show a composition bias toward low complexity. The Cupin type-1 2 domain maps to 403–569 (FNLRSNKPIY…TFPGSIEDVE (167 aa)). Residue asparagine 434 is glycosylated (N-linked (GlcNAc...) asparagine). A disordered region spans residues 476-495 (DQQRQQDEQEEEYEQGEEEV). The segment covering 483–492 (EQEEEYEQGE) has biased composition (acidic residues). The N-linked (GlcNAc...) asparagine glycan is linked to asparagine 519. Residues 580–589 (FANAQPQQQQ) show a composition bias toward low complexity. Residues 580–600 (FANAQPQQQQQREKEGRRGRR) are disordered.

The protein belongs to the 7S seed storage protein family. In terms of assembly, component of globulins complexes which accumulate in seeds.

Its function is as follows. Seed storage protein. Accumulates during seed development and is hydrolyzed after germination to provide a carbon and nitrogen source for the developing seedling. The chain is Conglutin beta 1 from Lupinus angustifolius (Narrow-leaved blue lupine).